The chain runs to 360 residues: Probable neutral protease 2 homolog MCYG_04257 (360 aa).

The first 17 residues, 1 to 17 (MQLIAFLAALGVPVAFA), serve as a signal peptide directing secretion. Residues 18 to 182 (ATIPSVPLNH…KVKAGSIDKR (165 aa)) constitute a propeptide that is removed on maturation. A disulfide bridge links C190 with C261. N-linked (GlcNAc...) asparagine glycosylation is present at N262. 2 disulfides stabilise this stretch: C268–C286 and C300–C360. H311 contributes to the Zn(2+) binding site. Residue E312 is part of the active site. 2 residues coordinate Zn(2+): H315 and D326.

The protein belongs to the peptidase M35 family. Zn(2+) is required as a cofactor.

It localises to the secreted. It catalyses the reaction Preferential cleavage of bonds with hydrophobic residues in P1'. Also 3-Asn-|-Gln-4 and 8-Gly-|-Ser-9 bonds in insulin B chain.. Its function is as follows. Probable secreted metalloprotease that shows high activities on basic nuclear substrates such as histone and protamine. May be involved in virulence. This is Probable neutral protease 2 homolog MCYG_04257 from Arthroderma otae (strain ATCC MYA-4605 / CBS 113480) (Microsporum canis).